The following is a 597-amino-acid chain: DNA mismatch repair protein MutL (597 aa).

The protein belongs to the DNA mismatch repair MutL/HexB family.

This protein is involved in the repair of mismatches in DNA. It is required for dam-dependent methyl-directed DNA mismatch repair. May act as a 'molecular matchmaker', a protein that promotes the formation of a stable complex between two or more DNA-binding proteins in an ATP-dependent manner without itself being part of a final effector complex. In Rhodopseudomonas palustris (strain BisB5), this protein is DNA mismatch repair protein MutL.